A 224-amino-acid chain; its full sequence is Glycerol-3-phosphate acyltransferase (224 aa).

The next 5 membrane-spanning stretches (helical) occupy residues 14 to 34 (FFPLAATLLGYLIGSLSFAVI), 64 to 84 (TAAIVTLLLDAAKGWLPVMLV), 98 to 118 (MALVGLAAFIGHLYPVFFNFA), 127 to 147 (LGVLLGLSPILALATGATWLI), and 160 to 180 (LTAAVFVPVYYVFGDGMAWYL).

The protein belongs to the PlsY family. Probably interacts with PlsX.

It localises to the cell inner membrane. The enzyme catalyses an acyl phosphate + sn-glycerol 3-phosphate = a 1-acyl-sn-glycero-3-phosphate + phosphate. It functions in the pathway lipid metabolism; phospholipid metabolism. Functionally, catalyzes the transfer of an acyl group from acyl-phosphate (acyl-PO(4)) to glycerol-3-phosphate (G3P) to form lysophosphatidic acid (LPA). This enzyme utilizes acyl-phosphate as fatty acyl donor, but not acyl-CoA or acyl-ACP. The chain is Glycerol-3-phosphate acyltransferase from Albidiferax ferrireducens (strain ATCC BAA-621 / DSM 15236 / T118) (Rhodoferax ferrireducens).